The chain runs to 363 residues: uncharacterized protein (363 aa).

This sequence belongs to the TelA family.

This is an uncharacterized protein from Bacillus subtilis (strain 168).